The sequence spans 259 residues: Glycerol-3-phosphate acyltransferase (259 aa).

Helical transmembrane passes span 11-31 (IILA…IIIV), 62-82 (LVVA…AILL), 93-112 (TSYF…PIYY), 124-144 (LGLL…VWFI), 152-172 (VSVA…IPYL), 188-208 (FSVA…HYWF), and 211-231 (IWAS…LILG).

Belongs to the PlsY family. As to quaternary structure, probably interacts with PlsX.

It is found in the cell membrane. The enzyme catalyses an acyl phosphate + sn-glycerol 3-phosphate = a 1-acyl-sn-glycero-3-phosphate + phosphate. Its pathway is lipid metabolism; phospholipid metabolism. In terms of biological role, catalyzes the transfer of an acyl group from acyl-phosphate (acyl-PO(4)) to glycerol-3-phosphate (G3P) to form lysophosphatidic acid (LPA). This enzyme utilizes acyl-phosphate as fatty acyl donor, but not acyl-CoA or acyl-ACP. The sequence is that of Glycerol-3-phosphate acyltransferase from Mycoplasma capricolum subsp. capricolum (strain California kid / ATCC 27343 / NCTC 10154).